A 209-amino-acid polypeptide reads, in one-letter code: Uracil phosphoribosyltransferase (209 aa).

5-phospho-alpha-D-ribose 1-diphosphate contacts are provided by residues arginine 79, arginine 104, and 131–139 (DPMLATGHS). Uracil-binding positions include isoleucine 194 and 199 to 201 (GDA). Aspartate 200 is a binding site for 5-phospho-alpha-D-ribose 1-diphosphate.

This sequence belongs to the UPRTase family. It depends on Mg(2+) as a cofactor.

It carries out the reaction UMP + diphosphate = 5-phospho-alpha-D-ribose 1-diphosphate + uracil. It participates in pyrimidine metabolism; UMP biosynthesis via salvage pathway; UMP from uracil: step 1/1. With respect to regulation, allosterically activated by GTP. Its function is as follows. Catalyzes the conversion of uracil and 5-phospho-alpha-D-ribose 1-diphosphate (PRPP) to UMP and diphosphate. This chain is Uracil phosphoribosyltransferase, found in Caulobacter vibrioides (strain ATCC 19089 / CIP 103742 / CB 15) (Caulobacter crescentus).